The primary structure comprises 225 residues: DnaA regulatory inactivator Hda (225 aa).

Belongs to the DnaA family. HdA subfamily. The active form seems to be an ADP-bound monomer. Forms the RIDA complex (regulatory inactivation of DnaA) of ATP-DnaA, ADP-Hda and the DNA-loaded beta sliding clamp (dnaN).

In terms of biological role, mediates the interaction of DNA replication initiator protein DnaA with DNA polymerase subunit beta sliding clamp (dnaN). Stimulates hydrolysis of ATP-DnaA to ADP-DnaA, rendering DnaA inactive for reinitiation, a process called regulatory inhibition of DnaA or RIDA. In Klebsiella pneumoniae (strain 342), this protein is DnaA regulatory inactivator Hda.